The primary structure comprises 312 residues: DNA primase small subunit PriS (312 aa).

Active-site residues include D88, D90, and D215.

This sequence belongs to the eukaryotic-type primase small subunit family. Heterodimer of a small subunit (PriS) and a large subunit (PriL). It depends on Mg(2+) as a cofactor. The cofactor is Mn(2+).

In terms of biological role, catalytic subunit of DNA primase, an RNA polymerase that catalyzes the synthesis of short RNA molecules used as primers for DNA polymerase during DNA replication. The small subunit contains the primase catalytic core and has DNA synthesis activity on its own. Binding to the large subunit stabilizes and modulates the activity, increasing the rate of DNA synthesis while decreasing the length of the DNA fragments, and conferring RNA synthesis capability. The DNA polymerase activity may enable DNA primase to also catalyze primer extension after primer synthesis. May also play a role in DNA repair. The protein is DNA primase small subunit PriS of Pyrobaculum aerophilum (strain ATCC 51768 / DSM 7523 / JCM 9630 / CIP 104966 / NBRC 100827 / IM2).